A 344-amino-acid chain; its full sequence is Dihydroorotase (344 aa).

The Zn(2+) site is built by His14 and His16. Substrate contacts are provided by residues 16–18 (HFR) and Asn42. Positions 100, 137, and 175 each coordinate Zn(2+). Lys100 carries the post-translational modification N6-carboxylysine. Residue His137 coordinates substrate. Leu220 contacts substrate. Asp248 contributes to the Zn(2+) binding site. Residue Asp248 is part of the active site. 2 residues coordinate substrate: His252 and Ala264.

Belongs to the metallo-dependent hydrolases superfamily. DHOase family. Class II DHOase subfamily. Homodimer. Zn(2+) is required as a cofactor.

The enzyme catalyses (S)-dihydroorotate + H2O = N-carbamoyl-L-aspartate + H(+). The protein operates within pyrimidine metabolism; UMP biosynthesis via de novo pathway; (S)-dihydroorotate from bicarbonate: step 3/3. In terms of biological role, catalyzes the reversible cyclization of carbamoyl aspartate to dihydroorotate. The protein is Dihydroorotase of Erythrobacter litoralis (strain HTCC2594).